A 251-amino-acid polypeptide reads, in one-letter code: Triosephosphate isomerase (251 aa).

9-11 (NWK) is a substrate binding site. His-95 serves as the catalytic Electrophile. Residue Glu-167 is the Proton acceptor of the active site. Residues Gly-173, Ser-213, and 234–235 (GG) contribute to the substrate site. Position 213 is a phosphoserine (Ser-213).

Belongs to the triosephosphate isomerase family. Homodimer.

It localises to the cytoplasm. The enzyme catalyses D-glyceraldehyde 3-phosphate = dihydroxyacetone phosphate. It functions in the pathway carbohydrate biosynthesis; gluconeogenesis. The protein operates within carbohydrate degradation; glycolysis; D-glyceraldehyde 3-phosphate from glycerone phosphate: step 1/1. Its function is as follows. Involved in the gluconeogenesis. Catalyzes stereospecifically the conversion of dihydroxyacetone phosphate (DHAP) to D-glyceraldehyde-3-phosphate (G3P). This chain is Triosephosphate isomerase, found in Anoxybacillus flavithermus (strain DSM 21510 / WK1).